We begin with the raw amino-acid sequence, 237 residues long: Large ribosomal subunit protein uL1 (237 aa).

The protein belongs to the universal ribosomal protein uL1 family. Part of the 50S ribosomal subunit.

In terms of biological role, binds directly to 23S rRNA. The L1 stalk is quite mobile in the ribosome, and is involved in E site tRNA release. Protein L1 is also a translational repressor protein, it controls the translation of the L11 operon by binding to its mRNA. In Synechococcus sp. (strain ATCC 27144 / PCC 6301 / SAUG 1402/1) (Anacystis nidulans), this protein is Large ribosomal subunit protein uL1.